A 148-amino-acid polypeptide reads, in one-letter code: 3-dehydroquinate dehydratase (148 aa).

Tyr-24 (proton acceptor) is an active-site residue. 3 residues coordinate substrate: Asn-80, His-86, and Asp-93. Residue His-106 is the Proton donor of the active site. Substrate contacts are provided by residues 107-108 and Arg-117; that span reads IS.

This sequence belongs to the type-II 3-dehydroquinase family. As to quaternary structure, homododecamer.

The catalysed reaction is 3-dehydroquinate = 3-dehydroshikimate + H2O. It participates in metabolic intermediate biosynthesis; chorismate biosynthesis; chorismate from D-erythrose 4-phosphate and phosphoenolpyruvate: step 3/7. Functionally, catalyzes a trans-dehydration via an enolate intermediate. This chain is 3-dehydroquinate dehydratase, found in Acidovorax sp. (strain JS42).